We begin with the raw amino-acid sequence, 141 residues long: Transmembrane protein 216 (141 aa).

Transmembrane regions (helical) follow at residues 15–35, 49–69, 82–102, and 115–135; these read ILFFLNGWYYATYFLLELLIF, LVLDVVMLLLYLGIEVIRLFF, LGISVALTFPSAMMASYYLLL, and SILLFFCGSELLLEMLTLATF.

In terms of assembly, part of the tectonic-like complex (also named B9 complex). Interacts with TMEM107.

The protein resides in the membrane. It localises to the cytoplasm. Its subcellular location is the cytoskeleton. The protein localises to the cilium basal body. Part of the tectonic-like complex which is required for tissue-specific ciliogenesis and may regulate ciliary membrane composition. The chain is Transmembrane protein 216 (Tmem216) from Rattus norvegicus (Rat).